Reading from the N-terminus, the 459-residue chain is uncharacterized protein (459 aa).

The TRAM domain maps to 6 to 64 (KNKQEKNIIITIKRLGINGEGIGYYKKKIIFIPGALPNEVVVAKIVDRHPHYLEGELVR). 4 residues coordinate S-adenosyl-L-methionine: Gln289, Tyr318, Glu339, and Asp387. Catalysis depends on Cys414, which acts as the Nucleophile.

This sequence belongs to the class I-like SAM-binding methyltransferase superfamily. RNA M5U methyltransferase family.

This is an uncharacterized protein from Lactobacillus johnsonii (strain CNCM I-12250 / La1 / NCC 533).